The chain runs to 506 residues: ATP synthase subunit alpha (506 aa).

169–176 (GDRQTGKT) serves as a coordination point for ATP.

This sequence belongs to the ATPase alpha/beta chains family. In terms of assembly, F-type ATPases have 2 components, CF(1) - the catalytic core - and CF(0) - the membrane proton channel. CF(1) has five subunits: alpha(3), beta(3), gamma(1), delta(1), epsilon(1). CF(0) has three main subunits: a(1), b(2) and c(9-12). The alpha and beta chains form an alternating ring which encloses part of the gamma chain. CF(1) is attached to CF(0) by a central stalk formed by the gamma and epsilon chains, while a peripheral stalk is formed by the delta and b chains.

The protein localises to the cell membrane. It catalyses the reaction ATP + H2O + 4 H(+)(in) = ADP + phosphate + 5 H(+)(out). In terms of biological role, produces ATP from ADP in the presence of a proton gradient across the membrane. The alpha chain is a regulatory subunit. The protein is ATP synthase subunit alpha of Lawsonia intracellularis (strain PHE/MN1-00).